Here is a 258-residue protein sequence, read N- to C-terminus: UPF0246 protein LHK_02295 (258 aa).

Belongs to the UPF0246 family.

The sequence is that of UPF0246 protein LHK_02295 from Laribacter hongkongensis (strain HLHK9).